The chain runs to 392 residues: uncharacterized protein (392 aa).

It belongs to the peptidase M24 family.

This is an uncharacterized protein from Sinorhizobium fredii (strain NBRC 101917 / NGR234).